Here is a 344-residue protein sequence, read N- to C-terminus: Centromere protein L (344 aa).

A disordered region spans residues 1 to 32 (MAGGRPAGSAIEMEGAMRTLPSSGRPSGTGWQ). Residues 20–32 (LPSSGRPSGTGWQ) are compositionally biased toward polar residues.

This sequence belongs to the CENP-L/IML3 family. In terms of assembly, component of the CENPA-HI complex, at least composed of CENPH, CENPI, CENPK, CENPL, CENPM, CENPO and CENPP.

The protein localises to the nucleus. It is found in the chromosome. Its subcellular location is the centromere. Component of the CENPA-HI complex, a centromeric complex involved in assembly of kinetochore proteins, mitotic progression and chromosome segregation. This chain is Centromere protein L (CENPL), found in Gallus gallus (Chicken).